Consider the following 1318-residue polypeptide: Uromodulin-like 1 (1318 aa).

Residues 1–21 form the signal peptide; the sequence is MLRTSGLALLALVSAVGPSQA. Over 22-1272 the chain is Extracellular; sequence SGFTEKGLSL…HAEAGLGAGY (1251 aa). In terms of domain architecture, EMI spans 33 to 106; sequence GYQLCSHRVT…YEQLGLYCVL (74 aa). Disulfide bonds link Cys37–Cys94, Cys61–Cys70, and Cys93–Cys104. N-linked (GlcNAc...) asparagine glycosylation occurs at Asn89. An N-linked (GlcNAc...) asparagine glycan is attached at Asn109. The region spanning 114–158 is the WAP domain; sequence FTSRPGACPAEGPEPSTSPCSLDIDCPGLEKCCPWSGGRYCMAPA. Asn172 is a glycosylation site (N-linked (GlcNAc...) asparagine). In terms of domain architecture, EGF-like 1; calcium-binding spans 264-313; the sequence is DVNECFYEELNACSGRELCANLEGSYWCVCHQEAPATSPRKLNLEWEDCP. The 85-residue stretch at 314 to 398 folds into the Fibronectin type-III 1 domain; the sequence is PVSDYVVLNV…TTLTIKTNAQ (85 aa). Residues Asn322, Asn335, and Asn417 are each glycosylated (N-linked (GlcNAc...) asparagine). An SEA 1 domain is found at 396–510; that stretch reads NAQVFEVTIK…QGTRVQDWDE (115 aa). Positions 507–552 constitute an EGF-like 2; calcium-binding domain; that stretch reads DWDECVDSAEHDCSPAAWCINLEGSYTCQCRTTRDATPSRAGRACE. 3 disulfides stabilise this stretch: Cys511-Cys525, Cys519-Cys534, and Cys536-Cys551. An N-linked (GlcNAc...) asparagine glycan is attached at Asn585. Positions 593 to 655 are disordered; the sequence is GYPQGTPAAG…PSPTEDPTGH (63 aa). The region spanning 702–791 is the Fibronectin type-III 2 domain; it reads VPVSIGRIMV…HLKVRTAARK (90 aa). Asn713 carries an N-linked (GlcNAc...) asparagine glycan. The SEA 2 domain occupies 788-900; sequence AARKLIGKVR…GDTFIQDYDE (113 aa). Residues 897-938 form the EGF-like 3; calcium-binding domain; that stretch reads DYDECERKEDDCVPGTSCRNTLGSFTCSCEGGAPDFPVEYSE. 2 cysteine pairs are disulfide-bonded: Cys901-Cys914 and Cys908-Cys923. Residues 938–957 are disordered; the sequence is ERPCEGDSPGNETWATSPER. N-linked (GlcNAc...) asparagine glycosylation is found at Asn984 and Asn1050. Residues 992 to 1235 form the ZP domain; that stretch reads LCEIEKVVVA…ATCKINCNNF (244 aa). A disulfide bond links Cys1157 and Cys1215. The chain crosses the membrane as a helical span at residues 1273–1293; it reads VVLIVVAIFVLVAGTATLLIV. Residues 1294-1318 are Cytoplasmic-facing; sequence RYQRMNGRYNFKIQSNNFSYQVFYE.

Isoform 4 is expressed at low level in kidney, testis and fetal thymus. Isoform 3 is expressed at low level in prostate, testis and fetal thymus.

It localises to the cell membrane. The protein resides in the cytoplasm. The sequence is that of Uromodulin-like 1 (UMODL1) from Homo sapiens (Human).